The following is a 399-amino-acid chain: Galactokinase (399 aa).

42–45 (EHTD) is a substrate binding site. Residues Ser76 and 133–139 (ASGLSSS) contribute to the ATP site. Mg(2+) contacts are provided by Ser139 and Glu171. Asp183 acts as the Proton acceptor in catalysis. Tyr233 serves as a coordination point for substrate.

The protein belongs to the GHMP kinase family. GalK subfamily.

It is found in the cytoplasm. It catalyses the reaction alpha-D-galactose + ATP = alpha-D-galactose 1-phosphate + ADP + H(+). Its pathway is carbohydrate metabolism; galactose metabolism. Catalyzes the transfer of the gamma-phosphate of ATP to D-galactose to form alpha-D-galactose-1-phosphate (Gal-1-P). The chain is Galactokinase from Lactococcus lactis subsp. cremoris (strain MG1363).